We begin with the raw amino-acid sequence, 424 residues long: UPF0597 protein Shew185_3080 (424 aa).

The protein belongs to the UPF0597 family.

The polypeptide is UPF0597 protein Shew185_3080 (Shewanella baltica (strain OS185)).